A 246-amino-acid polypeptide reads, in one-letter code: Predicted GPI-anchored protein 33 (246 aa).

The first 16 residues, 1-16 (MRGIILLSFVLTSCLA), serve as a signal peptide directing secretion. Asparagine 214 carries N-linked (GlcNAc...) asparagine glycosylation. Asparagine 219 carries GPI-anchor amidated asparagine lipidation. Residues 220–246 (AAGVYSTNSVLVFVSICIGFIGGSLGI) constitute a propeptide, removed in mature form.

It localises to the cell membrane. The chain is Predicted GPI-anchored protein 33 (PGA33) from Candida albicans (strain SC5314 / ATCC MYA-2876) (Yeast).